Reading from the N-terminus, the 568-residue chain is MSASVFNRCWSKVILETLSRQGVSHFCIAPGSRSTPLTLEAIRLQENGRGTCHAHFDERSLGFFALGIAKASKKPVAVIVTSGTATANLYPAIIEARQTDVPLIILTADRPPELLECGANQAILQQNMFAQYPIASINLPRPSQNYSAQWLISVLDQACFRQKQGGVIHINVPFAEPLYNANNDEIDLHPWLSNIQSWLTQNKNWIQHQEQHTEVITHKYWDQWRTKKGIIIVGRLPSEQAMGIAEWADNMGWIMITDIQSHVKPTLPYADIWLANQTVRKKLLQAEIVIQFGSGFIGKRINQFLAEFKGEYWIIENNQKAVDPYHHAHTRFNAKPHHWLRAHPPMRKKPWLLEPLALAKFCADFIKQRVGSNLNEASLAHNIELLLPKSNSVLFLGNSLFVRLADALSQPSANYPIYTNRGASGIDGLLATAAGIAVGSEQTLVAMIGDTSTLYDLNSFALFKQLNQPAIIFVINNNGGAIFDMLPVDIAVKEKYYRMSHYLEFSHIAAMFDLKYARPYTWADLATVLKQAYSRRETTVIEIKVNPNDGSNIYKDLIDKIGHALIGV.

This sequence belongs to the TPP enzyme family. MenD subfamily. Homodimer. Mg(2+) is required as a cofactor. It depends on Mn(2+) as a cofactor. The cofactor is thiamine diphosphate.

It catalyses the reaction isochorismate + 2-oxoglutarate + H(+) = 5-enolpyruvoyl-6-hydroxy-2-succinyl-cyclohex-3-ene-1-carboxylate + CO2. Its pathway is quinol/quinone metabolism; 1,4-dihydroxy-2-naphthoate biosynthesis; 1,4-dihydroxy-2-naphthoate from chorismate: step 2/7. It functions in the pathway quinol/quinone metabolism; menaquinone biosynthesis. In terms of biological role, catalyzes the thiamine diphosphate-dependent decarboxylation of 2-oxoglutarate and the subsequent addition of the resulting succinic semialdehyde-thiamine pyrophosphate anion to isochorismate to yield 2-succinyl-5-enolpyruvyl-6-hydroxy-3-cyclohexene-1-carboxylate (SEPHCHC). This chain is 2-succinyl-5-enolpyruvyl-6-hydroxy-3-cyclohexene-1-carboxylate synthase, found in Histophilus somni (strain 129Pt) (Haemophilus somnus).